The chain runs to 264 residues: Splicing factor U2af 38 kDa subunit (264 aa).

The C3H1-type 1 zinc-finger motif lies at 12-40 (EKDKVNCSFYFKIGACRHGDRCSRIHNKP). Ser-19 carries the post-translational modification Phosphoserine. Positions 44–149 (QTVLLQNLYV…RPVYSELSPV (106 aa)) constitute an RRM domain. Residues 151–178 (DFREACCRQYEMGECTRSGFCNFMHLKP) form a C3H1-type 2 zinc finger. The span at 190–219 (RRRRARSRSRSPGRRRGSRSRSRSPGRRGG) shows a compositional bias: basic residues. The disordered stretch occupies residues 190–264 (RRRRARSRSR…GGGGGGGGRY (75 aa)). A compositionally biased stretch (basic and acidic residues) spans 233–251 (NERDNMRGNDRGNDRDRRK). Residues 253-264 (GGGGGGGGGGRY) show a composition bias toward gly residues.

The protein belongs to the splicing factor SR family. Associates with a 65 kDa protein.

The protein localises to the nucleus. In terms of biological role, necessary for the splicing of pre-mRNA. Binds to the polypyrimidine tract of introns early during spliceosome assembly. In Drosophila melanogaster (Fruit fly), this protein is Splicing factor U2af 38 kDa subunit (U2af38).